The primary structure comprises 249 residues: Coproheme decarboxylase (249 aa).

Residues arginine 131, tyrosine 145–lysine 149, histidine 172, and glutamine 185 contribute to the Fe-coproporphyrin III site. Tyrosine 145 is an active-site residue.

It belongs to the ChdC family. Type 1 subfamily. Requires Fe-coproporphyrin III as cofactor.

It catalyses the reaction Fe-coproporphyrin III + 2 H2O2 + 2 H(+) = heme b + 2 CO2 + 4 H2O. The enzyme catalyses Fe-coproporphyrin III + H2O2 + H(+) = harderoheme III + CO2 + 2 H2O. The catalysed reaction is harderoheme III + H2O2 + H(+) = heme b + CO2 + 2 H2O. It functions in the pathway porphyrin-containing compound metabolism; protoheme biosynthesis. Its function is as follows. Involved in coproporphyrin-dependent heme b biosynthesis. Catalyzes the decarboxylation of Fe-coproporphyrin III (coproheme) to heme b (protoheme IX), the last step of the pathway. The reaction occurs in a stepwise manner with a three-propionate intermediate. The chain is Coproheme decarboxylase from Staphylococcus epidermidis (strain ATCC 35984 / DSM 28319 / BCRC 17069 / CCUG 31568 / BM 3577 / RP62A).